A 322-amino-acid chain; its full sequence is Germ cell-specific gene 1-like protein (322 aa).

Topologically, residues 1–8 (MKTSRRGR) are cytoplasmic. Residues 9-29 (ALLAVALNLLALLFATTAFLT) form a helical membrane-spanning segment. At 30-122 (TYWCQGTQRV…FIDLAPASEK (93 aa)) the chain is on the extracellular side. A helical membrane pass occupies residues 123–143 (GVLWLSVVSEVLYILLLVVGF). At 144–163 (SLMCLELVHSSSVIDGLKLN) the chain is on the cytoplasmic side. The helical transmembrane segment at 164–184 (AFAAVFTVLSGLLGMVAHMMY) threads the bilayer. At 185–207 (TQVFQVTVSLGPEDWRPHSWDYG) the chain is on the extracellular side. The chain crosses the membrane as a helical span at residues 208–228 (WSFCLAWGSFTCCMAASVTTL). Topologically, residues 229-322 (NSYTKTVIEF…RQCWVLGHWV (94 aa)) are cytoplasmic. Ser-274 carries the phosphoserine modification.

This sequence belongs to the GSG1 family. In terms of assembly, component of the inner core of AMPAR complexes. AMPAR complexes consist of an inner core made of 4 pore-forming GluA/GRIA proteins (GRIA1, GRIA2, GRIA3 and GRIA4) and 4 major auxiliary subunits arranged in a twofold symmetry. One of the two pairs of distinct binding sites is occupied either by CNIH2, CNIH3 or CACNG2, CACNG3. The other harbors CACNG2, CACNG3, CACNG4, CACNG8 or GSG1L. This inner core of AMPAR complexes is complemented by outer core constituents binding directly to the GluA/GRIA proteins at sites distinct from the interaction sites of the inner core constituents. Outer core constituents include at least PRRT1, PRRT2, CKAMP44/SHISA9, FRRS1L and NRN1. The proteins of the inner and outer core serve as a platform for other, more peripherally associated AMPAR constituents. Alone or in combination, these auxiliary subunits control the gating and pharmacology of the AMPAR complexes and profoundly impact their biogenesis and protein processing. As to expression, expressed in the brain, including hippocampus (at protein level).

Its subcellular location is the cell membrane. The protein localises to the synapse. Its function is as follows. As a component of the inner core of AMPAR complexes, modifies AMPA receptor (AMPAR) gating. The protein is Germ cell-specific gene 1-like protein (Gsg1l) of Mus musculus (Mouse).